The primary structure comprises 273 residues: Large ribosomal subunit protein uL2 (273 aa).

The tract at residues 228–273 is disordered; sequence IDHPHGGGEGKTSGGRHPVTPWGFSTKGKKTRKNKRTSKFIVKKRK. Residues 254–273 are compositionally biased toward basic residues; it reads KGKKTRKNKRTSKFIVKKRK.

It belongs to the universal ribosomal protein uL2 family. As to quaternary structure, part of the 50S ribosomal subunit. Forms a bridge to the 30S subunit in the 70S ribosome.

One of the primary rRNA binding proteins. Required for association of the 30S and 50S subunits to form the 70S ribosome, for tRNA binding and peptide bond formation. It has been suggested to have peptidyltransferase activity; this is somewhat controversial. Makes several contacts with the 16S rRNA in the 70S ribosome. The chain is Large ribosomal subunit protein uL2 from Rickettsia typhi (strain ATCC VR-144 / Wilmington).